The primary structure comprises 86 residues: UPF0457 protein SAUSA300_2132 (86 aa).

The protein belongs to the UPF0457 family.

The chain is UPF0457 protein SAUSA300_2132 from Staphylococcus aureus (strain USA300).